The following is a 556-amino-acid chain: 2-succinyl-5-enolpyruvyl-6-hydroxy-3-cyclohexene-1-carboxylate synthase (556 aa).

It belongs to the TPP enzyme family. MenD subfamily. Homodimer. Requires Mg(2+) as cofactor. Mn(2+) is required as a cofactor. Thiamine diphosphate serves as cofactor.

The catalysed reaction is isochorismate + 2-oxoglutarate + H(+) = 5-enolpyruvoyl-6-hydroxy-2-succinyl-cyclohex-3-ene-1-carboxylate + CO2. The protein operates within quinol/quinone metabolism; 1,4-dihydroxy-2-naphthoate biosynthesis; 1,4-dihydroxy-2-naphthoate from chorismate: step 2/7. It functions in the pathway quinol/quinone metabolism; menaquinone biosynthesis. Its function is as follows. Catalyzes the thiamine diphosphate-dependent decarboxylation of 2-oxoglutarate and the subsequent addition of the resulting succinic semialdehyde-thiamine pyrophosphate anion to isochorismate to yield 2-succinyl-5-enolpyruvyl-6-hydroxy-3-cyclohexene-1-carboxylate (SEPHCHC). The chain is 2-succinyl-5-enolpyruvyl-6-hydroxy-3-cyclohexene-1-carboxylate synthase from Salmonella heidelberg (strain SL476).